The chain runs to 222 residues: Protein SHI RELATED SEQUENCE 4 (222 aa).

Zn(2+)-binding residues include Cys-72, Cys-75, Cys-83, Cys-88, Cys-92, and Cys-99. A DNA-binding region (zn(2)-C6 fungal-type; degenerate) is located at residues 72–99; it reads CQECGNQAKKGCTHGRCRTCCKSNGLHC. The segment at 114–137 is disordered; it reads RERQQQLQTPTSNPTGGSGRVGKY. Residues 118–128 show a composition bias toward polar residues; that stretch reads QQLQTPTSNPT. Positions 191 to 194 match the Required for homo- and heterodimerization motif; that stretch reads IAGH.

This sequence belongs to the SHI protein family. In terms of tissue distribution, expressed in cotyledon tips, leaf primordia, hydathodes, stipules, and lateral root primordia and weakly at the edges of petals and sepals.

Its subcellular location is the nucleus. Transcription activator that binds DNA on 5'-ACTCTAC-3' and promotes auxin homeostasis-regulating gene expression (e.g. YUC genes), as well as genes affecting stamen development, cell expansion and timing of flowering. Synergistically with other SHI-related proteins, regulates gynoecium, stamen and leaf development in a dose-dependent manner, controlling apical-basal patterning. Promotes style and stigma formation, and influences vascular development during gynoecium development. May also have a role in the formation and/or maintenance of the shoot apical meristem (SAM). The sequence is that of Protein SHI RELATED SEQUENCE 4 (SRS4) from Arabidopsis thaliana (Mouse-ear cress).